Reading from the N-terminus, the 174-residue chain is Secreted cysteine-rich protein UMAG_00792 (174 aa).

An N-terminal signal peptide occupies residues 1–26 (MVSFKSSSLFLHSLSALLVLTTLSSA). A glycan (N-linked (GlcNAc...) asparagine) is linked at N77.

As to quaternary structure, secreted cysteine-rich proteins (SCRPs) are predicted to form amyloids.

The protein resides in the secreted. Secreted cysteine-rich protein that might form amyloid strutures which are involved in attachment to hydrophobic surfaces and in formation of hydrophobic aerial hyphae. This chain is Secreted cysteine-rich protein UMAG_00792, found in Mycosarcoma maydis (Corn smut fungus).